Consider the following 360-residue polypeptide: Peptide chain release factor 1 (360 aa).

Glutamine 235 carries the post-translational modification N5-methylglutamine. Positions 284-293 (HKRQQEEAST) are enriched in basic and acidic residues. The segment at 284–305 (HKRQQEEASTRRNLLGSGDRSD) is disordered.

It belongs to the prokaryotic/mitochondrial release factor family. Methylated by PrmC. Methylation increases the termination efficiency of RF1.

It localises to the cytoplasm. Its function is as follows. Peptide chain release factor 1 directs the termination of translation in response to the peptide chain termination codons UAG and UAA. In Pectobacterium atrosepticum (strain SCRI 1043 / ATCC BAA-672) (Erwinia carotovora subsp. atroseptica), this protein is Peptide chain release factor 1.